The sequence spans 307 residues: Glycine--tRNA ligase alpha subunit (307 aa).

Belongs to the class-II aminoacyl-tRNA synthetase family. In terms of assembly, tetramer of two alpha and two beta subunits.

Its subcellular location is the cytoplasm. The enzyme catalyses tRNA(Gly) + glycine + ATP = glycyl-tRNA(Gly) + AMP + diphosphate. This is Glycine--tRNA ligase alpha subunit from Levilactobacillus brevis (strain ATCC 367 / BCRC 12310 / CIP 105137 / JCM 1170 / LMG 11437 / NCIMB 947 / NCTC 947) (Lactobacillus brevis).